The primary structure comprises 61 residues: Sperm protamine P1 (61 aa).

The segment at 1-61 is disordered; that stretch reads MARYRHSRSR…RYSRRRRRRY (61 aa).

It belongs to the protamine P1 family. As to expression, testis.

It localises to the nucleus. The protein localises to the chromosome. Protamines substitute for histones in the chromatin of sperm during the haploid phase of spermatogenesis. They compact sperm DNA into a highly condensed, stable and inactive complex. This chain is Sperm protamine P1 (PRM1), found in Onychogalea fraenata (Bridled nail-tailed wallaby).